We begin with the raw amino-acid sequence, 216 residues long: Ras-related protein Rab-5C (216 aa).

GTP contacts are provided by S30, A31, G33, K34, S35, S36, H47, E48, T53, G79, N134, K135, D137, A165, and K166. S35 lines the Mg(2+) pocket. 2 consecutive short sequence motifs (switch) follow at residues 45–57 (QFHE…IGAA) and 78–94 (AGQE…YRGA). T53 lines the Mg(2+) pocket. A disordered region spans residues 184–216 (KNEPQNAPGGPGRNRVVDLQESSQPSRSQCCSN). Polar residues predominate over residues 203–216 (QESSQPSRSQCCSN). 2 S-geranylgeranyl cysteine lipidation sites follow: C213 and C214.

The protein belongs to the small GTPase superfamily. Rab family. Mg(2+) serves as cofactor. As to expression, detected in brain, ovary, rectum, small intestine, large intestine, liver, spleen, follicle and kidney (at protein level).

Its subcellular location is the cell membrane. It is found in the early endosome membrane. The catalysed reaction is GTP + H2O = GDP + phosphate + H(+). With respect to regulation, regulated by guanine nucleotide exchange factors (GEFs) which promote the exchange of bound GDP for free GTP. Regulated by GTPase activating proteins (GAPs) which increase the GTP hydrolysis activity. Inhibited by GDP dissociation inhibitors (GDIs). In terms of biological role, the small GTPases Rab are key regulators of intracellular membrane trafficking, from the formation of transport vesicles to their fusion with membranes. Rabs cycle between an inactive GDP-bound form and an active GTP-bound form that is able to recruit to membranes different sets of downstream effectors directly responsible for vesicle formation, movement, tethering and fusion. The sequence is that of Ras-related protein Rab-5C (RAB5C) from Gallus gallus (Chicken).